A 508-amino-acid polypeptide reads, in one-letter code: Cytochrome P450 4A12B (508 aa).

An N-terminal signal peptide occupies residues 1–37 (MSASALSSIRFPGSISEYLQVASVLSLLLLLFKTAQL). 2 residues coordinate heme: glutamate 319 and cysteine 455.

The protein belongs to the cytochrome P450 family. Heme is required as a cofactor. As to expression, expressed in lung, but almost undetectable in the kidneys of five different strains.

The protein localises to the endoplasmic reticulum membrane. Its subcellular location is the microsome membrane. The enzyme catalyses an organic molecule + reduced [NADPH--hemoprotein reductase] + O2 = an alcohol + oxidized [NADPH--hemoprotein reductase] + H2O + H(+). It catalyses the reaction dodecanoate + reduced [NADPH--hemoprotein reductase] + O2 = 11-hydroxydodecanoate + oxidized [NADPH--hemoprotein reductase] + H2O + H(+). The catalysed reaction is dodecanoate + reduced [NADPH--hemoprotein reductase] + O2 = 12-hydroxydodecanoate + oxidized [NADPH--hemoprotein reductase] + H2O + H(+). It carries out the reaction (5Z,8Z,11Z,14Z)-eicosatetraenoate + reduced [NADPH--hemoprotein reductase] + O2 = 18-hydroxy-(5Z,8Z,11Z,14Z)-eicosatetraenoate + oxidized [NADPH--hemoprotein reductase] + H2O + H(+). The enzyme catalyses (5Z,8Z,11Z,14Z)-eicosatetraenoate + reduced [NADPH--hemoprotein reductase] + O2 = 19-hydroxy-(5Z,8Z,11Z,14Z)-eicosatetraenoate + oxidized [NADPH--hemoprotein reductase] + H2O + H(+). It catalyses the reaction (5Z,8Z,11Z,14Z)-eicosatetraenoate + reduced [NADPH--hemoprotein reductase] + O2 = 20-hydroxy-(5Z,8Z,11Z,14Z)-eicosatetraenoate + oxidized [NADPH--hemoprotein reductase] + H2O + H(+). The catalysed reaction is (5Z,8Z,11Z,14Z,17Z)-eicosapentaenoate + reduced [NADPH--hemoprotein reductase] + O2 = 19-hydroxy-(5Z,8Z,11Z,14Z,17Z)-eicosapentaenoate + oxidized [NADPH--hemoprotein reductase] + H2O + H(+). It carries out the reaction (5Z,8Z,11Z,14Z,17Z)-eicosapentaenoate + reduced [NADPH--hemoprotein reductase] + O2 = 20-hydroxy-(5Z,8Z,11Z,14Z,17Z)-eicosapentaenoate + oxidized [NADPH--hemoprotein reductase] + H2O + H(+). The enzyme catalyses (5Z,8Z,11Z,14Z,17Z)-eicosapentaenoate + reduced [NADPH--hemoprotein reductase] + O2 = (17S,18R)-epoxy-(5Z,8Z,11Z,14Z)-eicosatetraenoate + oxidized [NADPH--hemoprotein reductase] + H2O + H(+). It catalyses the reaction (5Z,8Z,11Z,14Z,17Z)-eicosapentaenoate + reduced [NADPH--hemoprotein reductase] + O2 = (17R,18S)-epoxy-(5Z,8Z,11Z,14Z)-eicosatetraenoate + oxidized [NADPH--hemoprotein reductase] + H2O + H(+). The protein operates within lipid metabolism; fatty acid metabolism. Activated by cytochrome b5. The Vmax almost doubles in the presence of cytochrome b5. A cytochrome P450 monooxygenase involved in the metabolism of fatty acids and their oxygenated derivatives (oxylipins). Mechanistically, uses molecular oxygen inserting one oxygen atom into a substrate, and reducing the second into a water molecule, with two electrons provided by NADPH via cytochrome P450 reductase (CPR; NADPH-ferrihemoprotein reductase). Catalyzes predominantly the oxidation of the terminal carbon (omega-oxidation) of saturated and unsaturated fatty acids. May act as a major omega-hydroxylase for dodecanoic (lauric) acid in kidney. Participates in omega-hydroxylation of (5Z,8Z,11Z,14Z)-eicosatetraenoic acid (arachidonate) to 20-hydroxyeicosatetraenoic acid (20-HETE), a signaling molecule acting both as vasoconstrictive and natriuretic with overall effect on arterial blood pressure. Acts as an omega-hydroxylase and epoxidase toward (5Z,8Z,11Z,14Z,17Z)-eicosapentaenoc acid (EPA). Catalyzes the epoxidation of the last double bond of EPA with no preferred stereoselectivity, producing both (R,S) and (S,R) stereoisomers. Can also catalyze the omega-1 and omega-2 oxidation of fatty acids with lower efficiency. This chain is Cytochrome P450 4A12B, found in Mus musculus (Mouse).